Consider the following 454-residue polypeptide: Tubulin beta-3 chain (454 aa).

The GTP site is built by Gln-11, Glu-75, Ser-144, Gly-148, Thr-149, Gly-150, Asn-210, and Asn-232. Glu-75 is a binding site for Mg(2+). The disordered stretch occupies residues 435 to 454 (TADDEFDPEVNQEEVEGDCI).

This sequence belongs to the tubulin family. As to quaternary structure, dimer of alpha and beta chains. A typical microtubule is a hollow water-filled tube with an outer diameter of 25 nm and an inner diameter of 15 nM. Alpha-beta heterodimers associate head-to-tail to form protofilaments running lengthwise along the microtubule wall with the beta-tubulin subunit facing the microtubule plus end conferring a structural polarity. Microtubules usually have 13 protofilaments but different protofilament numbers can be found in some organisms and specialized cells. Requires Mg(2+) as cofactor.

It is found in the cytoplasm. It localises to the cytoskeleton. Tubulin is the major constituent of microtubules, a cylinder consisting of laterally associated linear protofilaments composed of alpha- and beta-tubulin heterodimers. Microtubules grow by the addition of GTP-tubulin dimers to the microtubule end, where a stabilizing cap forms. Below the cap, tubulin dimers are in GDP-bound state, owing to GTPase activity of alpha-tubulin. The protein is Tubulin beta-3 chain (betaTub60D) of Drosophila melanogaster (Fruit fly).